A 212-amino-acid polypeptide reads, in one-letter code: Ribonuclease HII (212 aa).

One can recognise an RNase H type-2 domain in the interval 18-212; it reads GCVFGVDEAG…APVAQQELFR (195 aa). A divalent metal cation is bound by residues Asp24, Glu25, and Asp118.

This sequence belongs to the RNase HII family. Mn(2+) serves as cofactor. It depends on Mg(2+) as a cofactor.

The protein localises to the cytoplasm. The catalysed reaction is Endonucleolytic cleavage to 5'-phosphomonoester.. In terms of biological role, endonuclease that specifically degrades the RNA of RNA-DNA hybrids. The chain is Ribonuclease HII from Erythrobacter litoralis (strain HTCC2594).